Reading from the N-terminus, the 131-residue chain is Small ribosomal subunit protein eS17 (131 aa).

It belongs to the eukaryotic ribosomal protein eS17 family.

This is Small ribosomal subunit protein eS17 (RpS17) from Drosophila melanogaster (Fruit fly).